The primary structure comprises 161 residues: Transcription elongation factor GreB (161 aa).

Belongs to the GreA/GreB family. GreB subfamily.

Necessary for efficient RNA polymerase transcription elongation past template-encoded arresting sites. The arresting sites in DNA have the property of trapping a certain fraction of elongating RNA polymerases that pass through, resulting in locked ternary complexes. Cleavage of the nascent transcript by cleavage factors such as GreA or GreB allows the resumption of elongation from the new 3'terminus. GreB releases sequences of up to 9 nucleotides in length. The chain is Transcription elongation factor GreB from Vibrio cholerae serotype O1 (strain ATCC 39315 / El Tor Inaba N16961).